The sequence spans 203 residues: Large ribosomal subunit protein eL15 (203 aa).

The segment at alanine 166 to arginine 203 is disordered. The span at lysine 169 to lysine 192 shows a compositional bias: basic residues. Polar residues predominate over residues arginine 193 to arginine 203.

This sequence belongs to the eukaryotic ribosomal protein eL15 family.

The chain is Large ribosomal subunit protein eL15 (rpl15) from Aspergillus niger.